Consider the following 743-residue polypeptide: MSSNSSCLVTNQGGALPLTATCLEGFYCPNNSLENPPEICPPTPQCRLTRLQEYHNICDHAQGTYEPIVCQPGFYCPSGGKRQIPCPKGHFCPLGTVEPFKCFGLSSCAEGSEREIPLAGLLCSILLDIFLVIVVSWPFPFAWIRQLSRGKLRRGAGGNDSESGVISAGRREISFSESKYHVSQFFTSDGSHGTAAGIEVEFSGISMRPTRSGIETLCLQNGVIRAGSFVGVMGPSGSGKSTLVKVLTGRAQPTTGSVLINGDTCRAAELRDLLALVPQDDIILPDLTVQENILYSSRVRIGSSRKDSEIEQYVDHLIISLGLNKVRNRLIGEVGKRGLSGGERKRVNIALELAAVPGIIVLDEPTSGLDAMTALSVIELLKSLTKQGVIVICVIHQPRLEIFAALDDLLLLNHGRQVYFGSAAAAKQCFQDAGYTFPLNSNPTDTMMDIMSCHDNLHLTDYPRNKPALPKQNLRIVLQSVKKIRAPWYCQVLLAFMRGTKQQTRQYPSFVLEILTGAGCGILIGLSNYEFKGHLFQGLFHLPFQLLSSPVSYRLLTEQGMLLCLTIGCAAGPAGVKTFGEEKLVFLRESCSGYSEGAYFLGKALSTLIRIFLSALHFTSFYLILTTPIVSFPNQLIVNLLYFYCIYGAASMISAITSPKNGPLITMLTSVLFCALSGCAPRLASVKSWNLAWLWYICPAVWIAEANFNQYTDPLAYLYDIKPAAEDAIRAWDRLSLHSLFIV.

Asn-4 and Asn-30 each carry an N-linked (GlcNAc...) asparagine glycan. The helical transmembrane segment at 124 to 144 threads the bilayer; it reads SILLDIFLVIVVSWPFPFAWI. Residue Asn-159 is glycosylated (N-linked (GlcNAc...) asparagine). In terms of domain architecture, ABC transporter spans 200–439; it reads VEFSGISMRP…FQDAGYTFPL (240 aa). An ATP-binding site is contributed by 234–241; that stretch reads GPSGSGKS. A run of 5 helical transmembrane segments spans residues 507-527, 560-580, 611-631, 636-656, and 661-681; these read YPSFVLEILTGAGCGILIGLS, GMLLCLTIGCAAGPAGVKTFG, IFLSALHFTSFYLILTTPIVS, LIVNLLYFYCIYGAASMISAI, and NGPLITMLTSVLFCALSGCAP.

Belongs to the ABC transporter superfamily. ABCG family.

The protein resides in the membrane. Its function is as follows. ABC-type transporter; part of the cla gene cluster that produces clavatol and ortho-quinone methide. The clavatol biosynthesis cluster cla and the terrestric acid cluster tra are both involved in the production of peniphenones and penilactones. The protein is ABC-type transporter claG of Penicillium crustosum (Blue mold fungus).